Reading from the N-terminus, the 393-residue chain is Phosphoglycerate kinase (393 aa).

Residues aspartate 21–asparagine 23, arginine 36, histidine 59–arginine 62, arginine 114, and arginine 147 each bind substrate. Residues lysine 198, glutamate 314, and glycine 340 to threonine 343 each bind ATP.

It belongs to the phosphoglycerate kinase family. Monomer.

The protein localises to the cytoplasm. It carries out the reaction (2R)-3-phosphoglycerate + ATP = (2R)-3-phospho-glyceroyl phosphate + ADP. It participates in carbohydrate degradation; glycolysis; pyruvate from D-glyceraldehyde 3-phosphate: step 2/5. The sequence is that of Phosphoglycerate kinase from Buchnera aphidicola subsp. Baizongia pistaciae (strain Bp).